The sequence spans 125 residues: MSTKKIMLKSSDGKMFEIEEETARQCQTIAHMIEAECTDNVIPVSNVTSEILEMVIEYCNKHHVDAANPCSDEDLKKWDKEFMEKDQYTIFHLMNAAYDLHIKSLLALAYQTVADMVNDNKWAFE.

An interaction with the F-box domain of F-box proteins region spans residues 94-125; that stretch reads MNAAYDLHIKSLLALAYQTVADMVNDNKWAFE.

The protein belongs to the SKP1 family. Part of a SCF (SKP1-cullin-F-box) protein ligase complex. Restricted to siliques.

Its subcellular location is the nucleus. Its pathway is protein modification; protein ubiquitination. In terms of biological role, involved in ubiquitination and subsequent proteasomal degradation of target proteins. Together with CUL1, RBX1 and a F-box protein, it forms a SCF E3 ubiquitin ligase complex. The functional specificity of this complex depends on the type of F-box protein. In the SCF complex, it serves as an adapter that links the F-box protein to CUL1. The polypeptide is SKP1-like protein 7 (ASK7) (Arabidopsis thaliana (Mouse-ear cress)).